Reading from the N-terminus, the 91-residue chain is Cell division protein FtsB (91 aa).

Residues 1–3 (MKF) are Cytoplasmic-facing. Residues 4–21 (IVGLLLVLLLALQYQLWI) form a helical membrane-spanning segment. Residues 22 to 91 (SKDGLGELRQ…ETFFQVVEEP (70 aa)) lie on the Periplasmic side of the membrane. The stretch at 26 to 74 (LGELRQLSRSIKQQRHENATLIERNQVLKAEVQDLKSGLDALEERARSG) forms a coiled coil.

The protein belongs to the FtsB family. In terms of assembly, part of a complex composed of FtsB, FtsL and FtsQ.

It localises to the cell inner membrane. Its function is as follows. Essential cell division protein. May link together the upstream cell division proteins, which are predominantly cytoplasmic, with the downstream cell division proteins, which are predominantly periplasmic. The polypeptide is Cell division protein FtsB (Nitrosococcus oceani (strain ATCC 19707 / BCRC 17464 / JCM 30415 / NCIMB 11848 / C-107)).